The primary structure comprises 452 residues: Enolase (452 aa).

(2R)-2-phosphoglycerate is bound at residue Gln-167. The active-site Proton donor is the Glu-209. Asp-250, Glu-310, and Asp-337 together coordinate Mg(2+). 4 residues coordinate (2R)-2-phosphoglycerate: Lys-362, Arg-391, Ser-392, and Lys-413. Lys-362 functions as the Proton acceptor in the catalytic mechanism.

The protein belongs to the enolase family. It depends on Mg(2+) as a cofactor.

The protein localises to the cytoplasm. The protein resides in the secreted. It localises to the cell surface. It carries out the reaction (2R)-2-phosphoglycerate = phosphoenolpyruvate + H2O. The protein operates within carbohydrate degradation; glycolysis; pyruvate from D-glyceraldehyde 3-phosphate: step 4/5. Its function is as follows. Catalyzes the reversible conversion of 2-phosphoglycerate (2-PG) into phosphoenolpyruvate (PEP). It is essential for the degradation of carbohydrates via glycolysis. The sequence is that of Enolase from Mycoplasmopsis synoviae (strain 53) (Mycoplasma synoviae).